The chain runs to 438 residues: Tyrosine--tRNA ligase (438 aa).

Residue Tyr47 coordinates L-tyrosine. A 'HIGH' region motif is present at residues 52 to 61 (PTATSLHVGG). Residues Tyr183 and Gln187 each contribute to the L-tyrosine site. The short motif at 243-247 (KMGKT) is the 'KMSKS' region element. Lys246 is a binding site for ATP. The region spanning 370–436 (LWIVEALQTA…GKRKYALLKI (67 aa)) is the S4 RNA-binding domain.

This sequence belongs to the class-I aminoacyl-tRNA synthetase family. TyrS type 1 subfamily. In terms of assembly, homodimer.

It localises to the cytoplasm. The catalysed reaction is tRNA(Tyr) + L-tyrosine + ATP = L-tyrosyl-tRNA(Tyr) + AMP + diphosphate + H(+). Its function is as follows. Catalyzes the attachment of tyrosine to tRNA(Tyr) in a two-step reaction: tyrosine is first activated by ATP to form Tyr-AMP and then transferred to the acceptor end of tRNA(Tyr). This is Tyrosine--tRNA ligase from Rhodopirellula baltica (strain DSM 10527 / NCIMB 13988 / SH1).